Here is a 388-residue protein sequence, read N- to C-terminus: Chorismate synthase (388 aa).

2 residues coordinate NADP(+): Arg39 and Arg45. FMN-binding positions include 130–132, 251–252, Gly296, 311–315, and Arg337; these read RSS, NA, and KPIPT.

It belongs to the chorismate synthase family. In terms of assembly, homotetramer. It depends on FMNH2 as a cofactor.

It carries out the reaction 5-O-(1-carboxyvinyl)-3-phosphoshikimate = chorismate + phosphate. Its pathway is metabolic intermediate biosynthesis; chorismate biosynthesis; chorismate from D-erythrose 4-phosphate and phosphoenolpyruvate: step 7/7. In terms of biological role, catalyzes the anti-1,4-elimination of the C-3 phosphate and the C-6 proR hydrogen from 5-enolpyruvylshikimate-3-phosphate (EPSP) to yield chorismate, which is the branch point compound that serves as the starting substrate for the three terminal pathways of aromatic amino acid biosynthesis. This reaction introduces a second double bond into the aromatic ring system. This Streptococcus pyogenes serotype M5 (strain Manfredo) protein is Chorismate synthase.